Here is a 1469-residue protein sequence, read N- to C-terminus: Chromosome condensation protein dpy-27 (1469 aa).

The interval 1–25 is disordered; the sequence is MQPFKRRALTSDDDRPYADTDSMPE. Positions 9-18 are enriched in basic and acidic residues; the sequence is LTSDDDRPYA. Residue 122 to 129 participates in ATP binding; that stretch reads GPNGSGKS. Residues 356 to 542 adopt a coiled-coil conformation; it reads ELEENKDIML…KGTLQTMMAE (187 aa). The 116-residue stretch at 621 to 736 folds into the SMC hinge domain; it reads PGFKGRLGDL…VDSLEEATRI (116 aa). The tract at residues 758 to 781 is disordered; it reads GALTGGGKPTTGRIRNDNNPNMSG. 3 coiled-coil regions span residues 805–974, 1016–1056, and 1159–1182; these read LKLQ…AQLE, AYQT…DIIE, and TSAK…RMAR. The tract at residues 1404–1469 is disordered; that stretch reads LPEFNRFPPA…VQRRVRRSRH (66 aa). Positions 1439–1449 are enriched in acidic residues; sequence EEEDEEDELIE.

Belongs to the SMC family. SMC4 subfamily. Component of the dosage compensation complex, which contains the mix-1/SMC2 and dpy-27/SMC4 heterodimer, and three non SMC subunits that probably regulate the complex: dpy-26, capg-1 and dpy-28. Within the complex, interacts with dpy-28, mix-1, dpy-26 and capg-1. Interacts with dpy-21. Interacts with dpy-28; the interaction is required for dpy-28 protein stability and dpy-28 association with the X chromosome. Interacts with smcl-1.

It localises to the nucleus. Its subcellular location is the chromosome. Functionally, central component of the condensin I-like dosage compensation complex that associates specifically with hermaphrodite X chromosomes to reduce their gene transcription throughout development. Its strong similarity with the condensin subunit smc4 suggests that it may reduce the X-chromosome transcript level by condensing the chromatin structure during interphase. Involved in the recruitment of the dosage compensation proteins mix-1 and dpy-21 to the X chromosome. Might be involved in the reduction of histone H4 lysine 16 acetylation (H4K16ac) on dosage compensated X chromosomes. As a member of the dosage compensation complex, also binds to regulatory regions of the autosomal her-1 gene, required for male development, possibly contributing to its repression in hermaphrodites. Also plays a role in the regulation of growth and body fat metabolism downstream of the TOR complex 2 pathway. The sequence is that of Chromosome condensation protein dpy-27 (dpy-27) from Caenorhabditis elegans.